The sequence spans 852 residues: Probable LRR receptor-like serine/threonine-protein kinase At1g05700 (852 aa).

An N-terminal signal peptide occupies residues 1–25; sequence MEEFRFLYLIYSAAFALCLVVSVLA. Residues 26 to 510 are Extracellular-facing; the sequence is QDQSGFISID…SCRKSNSKKL (485 aa). N138, N182, N231, N240, N258, N293, N400, N415, and N431 each carry an N-linked (GlcNAc...) asparagine glycan. 3 LRR repeats span residues 410 to 432, 434 to 457, and 458 to 479; these read RITSLNLSSSGLTGHISSSFSNL, MIQELDLSNNGLTGDIPEFLSKLK, and FLRVLNLENNTLTGSVPSELLE. N-linked (GlcNAc...) asparagine glycosylation occurs at N466. The helical transmembrane segment at 511 to 531 threads the bilayer; it reads VIPLVASFAALFILLLLSGVF. Residues 532–852 lie on the Cytoplasmic side of the membrane; sequence WRIRNRRNKS…LQREESNKNY (321 aa). Residue T561 is modified to Phosphothreonine. The Protein kinase domain maps to 570–843; it reads NNFGQVLGKG…HIVRGLNECL (274 aa). ATP contacts are provided by residues 576–584 and K597; that span reads LGKGGFGTV. Y642 bears the Phosphotyrosine mark. D693 functions as the Proton acceptor in the catalytic mechanism. S697 and S727 each carry phosphoserine. A phosphothreonine mark is found at T728 and T733.

The protein belongs to the protein kinase superfamily. Ser/Thr protein kinase family.

It localises to the membrane. The catalysed reaction is L-seryl-[protein] + ATP = O-phospho-L-seryl-[protein] + ADP + H(+). It catalyses the reaction L-threonyl-[protein] + ATP = O-phospho-L-threonyl-[protein] + ADP + H(+). This chain is Probable LRR receptor-like serine/threonine-protein kinase At1g05700, found in Arabidopsis thaliana (Mouse-ear cress).